The chain runs to 54 residues: Apelin receptor early endogenous ligand (54 aa).

An N-terminal signal peptide occupies residues 1-25; it reads MRFQPLFWVFFIFAMSLLFITEEKS.

This sequence belongs to the Elabela/Toddler family. Interacts with APLNR.

It localises to the secreted. Its subcellular location is the extracellular space. In terms of biological role, peptide hormone that functions as endogenous ligand for the G-protein-coupled apelin receptor (APLNR/APJ), that plays a role in the regulation of normal cardiovascular function and fluid homeostasis. Functions as a balanced agonist activating both G(i) protein pathway and beta-arrestin pathway of APLNR. Downstream G proteins activation, apelin can inhibit cAMP production and activate key intracellular effectors such as ERKs. On the other hand, APLNR activation induces beta-arrestin recruitment to the membrane leading to desensitization and internalization of the receptor. Required for mesendodermal differentiation, blood vessels formation and heart morphogenesis during early development and for adult cardiovascular homeostasis. Acts as a motogen by promoting mesendodermal cell migration during gastrulation by binding and activating APLNR. Acts as an early embryonic regulator of cellular movement with a role in migration and development of cardiac progenitor cells. May act as a chemoattractant for the activation of angioblast migration toward the embryonic midline, i.e. the position of the future vessel formation, during vasculogenesis. Positively regulates sinus venosus (SV)-derived endothelial cells migration into the developing heart to promote coronary blood vessel sprouting. Plays a role in placental vascular development; promotes placental trophoblast invasion and spiral artery remodeling in the uterus. Involved in the regulation of maternal cardiovascular homeostasis to prevent gestational hypertension and for potent cardioprotective functions during heart failure. Mediates myocardial contractility in an ERK1/2-dependent manner. This is Apelin receptor early endogenous ligand from Rattus norvegicus (Rat).